The sequence spans 514 residues: FAD-dependent monooxygenase CPUR_05423 (514 aa).

Residues valine 79 and arginine 146 each contribute to the FAD site. Arginine 227 is an active-site residue. Aspartate 358 and glycine 371 together coordinate FAD.

This sequence belongs to the paxM FAD-dependent monooxygenase family. Requires FAD as cofactor.

It functions in the pathway pigment biosynthesis. Its function is as follows. FAD-dependent monooxygenase; part of the ergochrome gene cluster responsible for the typical purple-black color of the ergot sclerotia. The ergochrome gene cluster produces several ergot pigments including the yellow ergochrome secalonic acid and its derivatives, as well as the red anthraquinones endocrocin and clavorubin. The pathway begins with the synthesis of atrochrysone thioester by the polyketide synthase (PKS) CPUR_05437. The atrochrysone carboxyl ACP thioesterase CPUR_05436 then breaks the thioester bond and releases the atrochrysone carboxylic acid from CPUR_05437. The atrochrysone carboxylic acid is then converted to atrochrysone which is further transformed into emodin anthrone. The next step is performed by the anthrone oxygenase CPUR_05434 that catalyzes the oxidation of emodinanthrone to emodin. Emodin is further modified to yield monodictyphenone via several steps involving CPUR_05427, CPUR_05428, CPUR_05429 and CPUR_05430. The short chain dehydrogenase/reductase CPUR_05418 then catalyzes the C-5 ketoreduction to give the xanthone skeleton of the monomeric units. Ergochromes formation requires further dimerization steps of different xanthone units, probably catalyzed by the cytochrome P450 monooxygenase CPUR_05419. CPUR_05425, CPUR_05426 and CPUR_05431 are unique to Claviceps, thus it is likely that they are involved in further modification of xanthone units or in their dimerization. The yellow ergochromes and the red anthraquinone pigments endocrocin and clavorubin are products from the same PKS derived precursors and the latter are likely shunt products in the pathway of xanthone biosynthesis. It is proposed that atrochrysone carboxylic acid released from the PKS CPUR_05437 can also be converted to endocrocin anthrone which is further oxidized into endocrocin by CPUR_05435. Endocrocin could be then modified to clavorubin, possibly by CPUR_05423 and CPUR_05431. Clavorubin is the principal anthraquinone metabolite produced by the cluster with a much higher yield compared to endocrocin. The sequence is that of FAD-dependent monooxygenase CPUR_05423 from Claviceps purpurea (strain 20.1) (Ergot fungus).